The following is a 260-amino-acid chain: Acyl-coenzyme A diphosphatase FITM2 (260 aa).

Topologically, residues 1–23 (MERLENCAQMFQRRFLNESFRRH) are cytoplasmic. Residues 24–44 (CPVLLACIVLGGSLLKELCPL) form a helical membrane-spanning segment. At 45-57 (PDSYWNNKRNVLN) the chain is on the lumenal side. The chain crosses the membrane as a helical span at residues 58 to 78 (VYFVKFSWGWTLWLLLPFIAL). Residues 79 to 93 (TNYKLTRSTTKVLRR) are Cytoplasmic-facing. The chain crosses the membrane as a helical span at residues 94–114 (LSSLLVSTLIWYLCTNLFLYI). Topologically, residues 115-145 (ENITGSCYESEAMSDPKEHQDRRECRLHSGY) are lumenal. Residues 146–166 (WHGFDISGHCFLLSYCILLIL) traverse the membrane as a helical segment. The active site involves H154. The Cytoplasmic portion of the chain corresponds to 167-189 (EETSIISNIRFERHWHRMAINAQ). 2 consecutive transmembrane segments (helical) span residues 190–210 (FAALSILVIIWVWMFLCTAVY) and 211–231 (FHNIFQKVIGTAFGILAWYIT). H212 is an active-site residue. The Cytoplasmic portion of the chain corresponds to 232–260 (YRWWYLQPISPGLPPASASRSGKEPIYRN).

This sequence belongs to the FIT family. FIT2 subfamily.

It is found in the endoplasmic reticulum membrane. It carries out the reaction an acyl-CoA + H2O = an acyl-4'-phosphopantetheine + adenosine 3',5'-bisphosphate + 2 H(+). In terms of biological role, fatty acyl-coenzyme A (CoA) diphosphatase that hydrolyzes fatty acyl-CoA to yield acyl-4'-phosphopantetheine and adenosine 3',5'-bisphosphate. Preferentially hydrolyzes unsaturated long-chain acyl-CoA substrates in the endoplasmic reticulum (ER) lumen. This catalytic activity is required for maintaining ER structure and for lipid droplets (LDs) biogenesis, which are lipid storage organelles involved in maintaining lipid and energy homeostasis. May directly bind to diacylglycerol (DAGs) and triacylglycerol, which is also important for LD biogenesis. May support directional budding of nacent LDs from the ER into the cytosol by reducing DAG levels at sites of LD formation. May play a role in the regulation of cell morphology, ER morphology and cytoskeletal organization. The chain is Acyl-coenzyme A diphosphatase FITM2 from Xenopus tropicalis (Western clawed frog).